A 185-amino-acid polypeptide reads, in one-letter code: Elongation factor P (185 aa).

The protein belongs to the elongation factor P family.

The protein localises to the cytoplasm. The protein operates within protein biosynthesis; polypeptide chain elongation. Involved in peptide bond synthesis. Stimulates efficient translation and peptide-bond synthesis on native or reconstituted 70S ribosomes in vitro. Probably functions indirectly by altering the affinity of the ribosome for aminoacyl-tRNA, thus increasing their reactivity as acceptors for peptidyl transferase. This is Elongation factor P from Bacillus cytotoxicus (strain DSM 22905 / CIP 110041 / 391-98 / NVH 391-98).